Reading from the N-terminus, the 149-residue chain is Cell division protein SepF (149 aa).

The protein belongs to the SepF family. In terms of assembly, homodimer. Interacts with FtsZ.

The protein resides in the cytoplasm. Cell division protein that is part of the divisome complex and is recruited early to the Z-ring. Probably stimulates Z-ring formation, perhaps through the cross-linking of FtsZ protofilaments. Its function overlaps with FtsA. The polypeptide is Cell division protein SepF (Pelotomaculum thermopropionicum (strain DSM 13744 / JCM 10971 / SI)).